The primary structure comprises 291 residues: Ribosomal RNA small subunit methyltransferase I (291 aa).

The protein belongs to the methyltransferase superfamily. RsmI family.

Its subcellular location is the cytoplasm. It carries out the reaction cytidine(1402) in 16S rRNA + S-adenosyl-L-methionine = 2'-O-methylcytidine(1402) in 16S rRNA + S-adenosyl-L-homocysteine + H(+). Catalyzes the 2'-O-methylation of the ribose of cytidine 1402 (C1402) in 16S rRNA. The protein is Ribosomal RNA small subunit methyltransferase I of Neisseria meningitidis serogroup B (strain ATCC BAA-335 / MC58).